A 550-amino-acid chain; its full sequence is Arginine--tRNA ligase (550 aa).

The short motif at 130-140 is the 'HIGH' region element; it reads ANPTGPIHIGG.

Belongs to the class-I aminoacyl-tRNA synthetase family. In terms of assembly, monomer.

The protein resides in the cytoplasm. It catalyses the reaction tRNA(Arg) + L-arginine + ATP = L-arginyl-tRNA(Arg) + AMP + diphosphate. The protein is Arginine--tRNA ligase of Mycobacterium sp. (strain JLS).